The chain runs to 113 residues: MMSLAHSKFSCQRTRLLAVVLLAALWSSSLQQAAARVINDDCPNLIGNRDLYKKVEWICDDCANIYRSTGMASLCRKDCFFNEDFLWCVRATERSEDLAQLKQWVTILGAGRI.

A signal peptide spans 1-35 (MMSLAHSKFSCQRTRLLAVVLLAALWSSSLQQAAA). 3 disulfides stabilise this stretch: cysteine 42–cysteine 79, cysteine 59–cysteine 75, and cysteine 62–cysteine 88.

Belongs to the arthropod CHH/MIH/GIH/VIH hormone family.

It is found in the secreted. In terms of biological role, inhibits Y-organs where molting hormone (ecdysteroid) is secreted. A molting cycle is initiated when MIH secretion diminishes or stops. This is Molt-inhibiting hormone from Callinectes sapidus (Blue crab).